The chain runs to 437 residues: Exosome complex component RRP45 (437 aa).

S65 is subject to Phosphoserine. An N6-acetyllysine; alternate modification is found at K297. K297 participates in a covalent cross-link: Glycyl lysine isopeptide (Lys-Gly) (interchain with G-Cter in SUMO1); alternate. A Glycyl lysine isopeptide (Lys-Gly) (interchain with G-Cter in SUMO2); alternate cross-link involves residue K297. Phosphoserine occurs at positions 306 and 346. The interval 339–437 (IGEGIENSWG…KRRKKKRTAN (99 aa)) is disordered. Acidic residues predominate over residues 349 to 363 (DLEDSEKEEEEEGGI). S392, S394, and S407 each carry phosphoserine. Polar residues predominate over residues 413-425 (AQTSANQKAPSKS). Over residues 426 to 437 (QGKRRKKKRTAN) the composition is skewed to basic residues.

It belongs to the RNase PH family. Component of the RNA exosome core complex (Exo-9), composed of EXOSC1, EXOSC2, EXOSC3, EXOSC4, EXOSC5, EXOSC6, EXOSC7, EXOSC8 and EXOSC9; within the complex interacts with EXOSC3, EXOSC4, EXOSC5 and DIS3. The catalytically inactive RNA exosome core complex (Exo-9) associates with the catalytic subunit EXOSC10/RRP6. Exo-9 may associate with DIS3 to form the nucleolar exosome complex, or DIS3L to form the cytoplasmic exosome complex. Exo-9 is formed by a hexameric base ring consisting of the heterodimers EXOSC4-EXOSC9, EXOSC5-EXOSC8 and EXOSC6-EXOSC7, and a cap ring consisting of EXOSC1, EXOSC2 and EXOSC3. The RNA exosome complex associates with cofactors C1D/RRP47, MPHOSPH6/MPP6 and MTREX/MTR4. Interacts (via C-terminus region) with SETX (via N-terminus domain); the interaction enhances SETX sumoylation. Interacts with DIS3; the interaction is direct.

Its subcellular location is the cytoplasm. It is found in the nucleus. It localises to the nucleolus. The protein localises to the nucleoplasm. Functionally, non-catalytic component of the RNA exosome complex which has 3'-&gt;5' exoribonuclease activity and participates in a multitude of cellular RNA processing and degradation events. In the nucleus, the RNA exosome complex is involved in proper maturation of stable RNA species such as rRNA, snRNA and snoRNA, in the elimination of RNA processing by-products and non-coding 'pervasive' transcripts, such as antisense RNA species and promoter-upstream transcripts (PROMPTs), and of mRNAs with processing defects, thereby limiting or excluding their export to the cytoplasm. The RNA exosome may be involved in Ig class switch recombination (CSR) and/or Ig variable region somatic hypermutation (SHM) by targeting AICDA deamination activity to transcribed dsDNA substrates. In the cytoplasm, the RNA exosome complex is involved in general mRNA turnover and specifically degrades inherently unstable mRNAs containing AU-rich elements (AREs) within their 3' untranslated regions, and in RNA surveillance pathways, preventing translation of aberrant mRNAs. It seems to be involved in degradation of histone mRNA. The catalytic inactive RNA exosome core complex of 9 subunits (Exo-9) is proposed to play a pivotal role in the binding and presentation of RNA for ribonucleolysis, and to serve as a scaffold for the association with catalytic subunits and accessory proteins or complexes. EXOSC9 binds to ARE-containing RNAs. The chain is Exosome complex component RRP45 (Exosc9) from Rattus norvegicus (Rat).